The chain runs to 489 residues: Probable apyrase 1 (489 aa).

The Cytoplasmic segment spans residues 1–28 (MRRFSAAAGARQQQQQGEAVSDRVLRFR). Residues 29-49 (GVLVVVLAPVLLISLVLLLMP) traverse the membrane as a helical; Signal-anchor for type II membrane protein segment. At 50-489 (RAPASATVEG…GSAIEVASSS (440 aa)) the chain is on the extracellular side. 89–99 (VIFDAGSSGSR) provides a ligand contact to ATP. Glutamate 211 serves as the catalytic Proton acceptor. Residue 235–245 (GVVDLGGGSVQ) participates in ATP binding.

It belongs to the GDA1/CD39 NTPase family. Requires Ca(2+) as cofactor.

The protein resides in the membrane. The enzyme catalyses a ribonucleoside 5'-triphosphate + 2 H2O = a ribonucleoside 5'-phosphate + 2 phosphate + 2 H(+). Its function is as follows. Catalyzes the hydrolysis of phosphoanhydride bonds of nucleoside tri- and di-phosphates. The chain is Probable apyrase 1 (APY1) from Oryza sativa subsp. japonica (Rice).